The primary structure comprises 695 residues: Scarecrow-like protein 31 (695 aa).

Disordered stretches follow at residues 105 to 136 (VISDSQTQSSIPNNSITTSSSSNSGDYSNSSN) and 234 to 260 (ISKTRKNHHEREEEEDDLEEARRRSKQ). The segment covering 113–136 (SSIPNNSITTSSSSNSGDYSNSSN) has biased composition (low complexity). The stretch at 233–266 (AISKTRKNHHEREEEEDDLEEARRRSKQFAVNEE) forms a coiled coil. One can recognise a GRAS domain in the interval 306–693 (AKKKSRAVDF…RILFSSSCWV (388 aa)). The interval 313 to 377 (VDFRTLLTLC…EGSTGTMIQS (65 aa)) is leucine repeat I (LRI). Residues 396-461 (YSVFLSASPF…PGLRKLRITG (66 aa)) are VHIID. The VHIID motif lies at 427–431 (LHIVD). The interval 477-509 (DTGRRLTEYCKRFGVPFEYNAIASKNWETIKME) is leucine repeat II (LRII). The PFYRE stretch occupies residues 519–614 (LAVNAVLRFK…GEFYGREVMN (96 aa)). The interval 617 to 693 (ACEGVDRVER…RILFSSSCWV (77 aa)) is SAW.

This sequence belongs to the GRAS family. Expressed in seedlings, roots, cotyledons, leaves and sepals.

It is found in the nucleus. Functionally, probable transcription factor involved in plant development. This Arabidopsis thaliana (Mouse-ear cress) protein is Scarecrow-like protein 31 (SCL31).